Here is a 671-residue protein sequence, read N- to C-terminus: DNA ligase (671 aa).

NAD(+) contacts are provided by residues Asp32–Asp36, Ser81–Leu82, and Glu113. The active-site N6-AMP-lysine intermediate is the Lys115. Positions 136, 173, 290, and 314 each coordinate NAD(+). Zn(2+)-binding residues include Cys408, Cys411, Cys426, and Cys432. The BRCT domain maps to Glu593–Ala671.

The protein belongs to the NAD-dependent DNA ligase family. LigA subfamily. Requires Mg(2+) as cofactor. The cofactor is Mn(2+).

It catalyses the reaction NAD(+) + (deoxyribonucleotide)n-3'-hydroxyl + 5'-phospho-(deoxyribonucleotide)m = (deoxyribonucleotide)n+m + AMP + beta-nicotinamide D-nucleotide.. DNA ligase that catalyzes the formation of phosphodiester linkages between 5'-phosphoryl and 3'-hydroxyl groups in double-stranded DNA using NAD as a coenzyme and as the energy source for the reaction. It is essential for DNA replication and repair of damaged DNA. The chain is DNA ligase from Salmonella paratyphi C (strain RKS4594).